A 171-amino-acid chain; its full sequence is uncharacterized protein (171 aa).

An N-terminal signal peptide occupies residues 1-17 (MLKRIIWILFLLGLTWG).

In terms of biological role, part of the elfADCG-ycbUVF fimbrial operon, which promotes adhesion of bacteria to different abiotic surfaces. This is an uncharacterized protein from Escherichia coli (strain K12).